A 291-amino-acid polypeptide reads, in one-letter code: N-acetylmannosamine kinase (291 aa).

ATP is bound by residues 5-12 and 132-139; these read AIDIGGTK and GVGGGVVC. The Zn(2+) site is built by histidine 156, cysteine 166, cysteine 168, and cysteine 173.

The protein belongs to the ROK (NagC/XylR) family. NanK subfamily. Homodimer.

The catalysed reaction is an N-acyl-D-mannosamine + ATP = an N-acyl-D-mannosamine 6-phosphate + ADP + H(+). It participates in amino-sugar metabolism; N-acetylneuraminate degradation; D-fructose 6-phosphate from N-acetylneuraminate: step 2/5. Functionally, catalyzes the phosphorylation of N-acetylmannosamine (ManNAc) to ManNAc-6-P. The polypeptide is N-acetylmannosamine kinase (Salmonella gallinarum (strain 287/91 / NCTC 13346)).